A 575-amino-acid polypeptide reads, in one-letter code: Serine/threonine-protein kinase YPK1 (575 aa).

The segment at 1–53 (MMSWKFGKKFKEGGFLSGKHHSSNNNSPSDTSRSTTPTPGNPHPEDAVKPPVP) is disordered. Low complexity predominate over residues 23–38 (SNNNSPSDTSRSTTPT). Positions 245-500 (FELLKVIGKG…AQDIKNHPFF (256 aa)) constitute a Protein kinase domain. Residues 251 to 259 (IGKGSFGKV) and Lys274 contribute to the ATP site. Asp368 functions as the Proton acceptor in the catalytic mechanism. The AGC-kinase C-terminal domain maps to 502-573 (KHINFTKLWN…SVSPLGESVG (72 aa)). Phosphoserine occurs at positions 543 and 562.

Belongs to the protein kinase superfamily. AGC Ser/Thr protein kinase family. RAC subfamily.

It carries out the reaction L-seryl-[protein] + ATP = O-phospho-L-seryl-[protein] + ADP + H(+). The enzyme catalyses L-threonyl-[protein] + ATP = O-phospho-L-threonyl-[protein] + ADP + H(+). Functionally, probable serine/threonine-protein kinase which may act in the sphingolipid-mediated signaling pathway. May act downstream of TORC2 (TOR complex 2) and PDK1 to regulate sphingolipid metabolism. The sequence is that of Serine/threonine-protein kinase YPK1 from Cryptococcus neoformans var. grubii serotype A (strain H99 / ATCC 208821 / CBS 10515 / FGSC 9487) (Filobasidiella neoformans var. grubii).